We begin with the raw amino-acid sequence, 324 residues long: NADH-cytochrome b5 reductase 2 (324 aa).

A helical membrane pass occupies residues 31–47; the sequence is IPLIGGITLAAGAGYYY. Positions 70–178 constitute an FAD-binding FR-type domain; the sequence is QGWIGLKLAH…KGPLPKYPWE (109 aa). FAD is bound at residue 181–216; it reads KHDHICLIAGGTGITPMYQLVRKIFSNPEDKTKVTL.

The protein belongs to the flavoprotein pyridine nucleotide cytochrome reductase family. Requires FAD as cofactor.

It localises to the mitochondrion outer membrane. It catalyses the reaction 2 Fe(III)-[cytochrome b5] + NADH = 2 Fe(II)-[cytochrome b5] + NAD(+) + H(+). May mediate the reduction of outer membrane cytochrome b5. The polypeptide is NADH-cytochrome b5 reductase 2 (MCR1) (Ajellomyces capsulatus (strain NAm1 / WU24) (Darling's disease fungus)).